Reading from the N-terminus, the 268-residue chain is uncharacterized protein (268 aa).

This is an uncharacterized protein from Methanocaldococcus jannaschii (strain ATCC 43067 / DSM 2661 / JAL-1 / JCM 10045 / NBRC 100440) (Methanococcus jannaschii).